We begin with the raw amino-acid sequence, 254 residues long: N-acetylglucosamine-induced protein 1 (254 aa).

The protein localises to the cytoplasm. Functionally, N-acetylglucosamine-induced protein which plays a role in the N-acetylglucosamine metabolic pathway. This is N-acetylglucosamine-induced protein 1 from Candida albicans (strain SC5314 / ATCC MYA-2876) (Yeast).